Consider the following 301-residue polypeptide: Protease HtpX (301 aa).

The next 2 helical transmembrane spans lie at 4–24 (IGLF…VLFI) and 44–64 (TGLL…SLAM). His150 is a binding site for Zn(2+). The active site involves Glu151. His154 lines the Zn(2+) pocket. 2 helical membrane passes run 165-185 (LIQG…GHFV) and 201-221 (FITS…IVMW). Residue Glu227 participates in Zn(2+) binding.

It belongs to the peptidase M48B family. Requires Zn(2+) as cofactor.

It localises to the cell inner membrane. The chain is Protease HtpX from Alkalilimnicola ehrlichii (strain ATCC BAA-1101 / DSM 17681 / MLHE-1).